We begin with the raw amino-acid sequence, 339 residues long: DNA-directed RNA polymerase subunit alpha (339 aa).

The interval 1 to 235 is alpha N-terminal domain (alpha-NTD); it reads MVIQKNWQEL…DQLQIFVNFE (235 aa). The interval 251-339 is alpha C-terminal domain (alpha-CTD); sequence FNPALLKKVD…DLAKRFEEHY (89 aa).

It belongs to the RNA polymerase alpha chain family. In terms of assembly, homodimer. The RNAP catalytic core consists of 2 alpha, 1 beta, 1 beta' and 1 omega subunit. When a sigma factor is associated with the core the holoenzyme is formed, which can initiate transcription.

It catalyses the reaction RNA(n) + a ribonucleoside 5'-triphosphate = RNA(n+1) + diphosphate. Functionally, DNA-dependent RNA polymerase catalyzes the transcription of DNA into RNA using the four ribonucleoside triphosphates as substrates. This is DNA-directed RNA polymerase subunit alpha from Methylobacterium sp. (strain 4-46).